A 1056-amino-acid polypeptide reads, in one-letter code: Ribosomal protein S6 kinase delta-1 (1056 aa).

Residues 8-132 form the PX domain; sequence SADLARFYTV…DFFKGGVISD (125 aa). A disordered region spans residues 204 to 223; that stretch reads VGAVASDSEPSRVEDRESRS. The segment covering 212-222 has biased composition (basic and acidic residues); it reads EPSRVEDRESR. The MIT domain maps to 276–304; it reads VQGESSPTRREAVKRRTAEYLMRAESICS. Residues Ser281, Ser422, Ser423, Ser426, Ser446, Ser448, and Ser454 each carry the phosphoserine modification. The region spanning 343–444 is the Protein kinase 1 domain; the sequence is GVIDKVLLVM…SMPPRVCLQQ (102 aa). Residues 426 to 504 form a disordered region; it reads SLDIKEGRPS…KWLDSGSSSE (79 aa). Residues 443–454 are compositionally biased toward low complexity; that stretch reads QQPSASPQGGSS. Residues 473–482 show a composition bias toward polar residues; that stretch reads TSLTPSSQDD. Phosphoserine is present on residues Ser493 and Ser527. Positions 529-588 are disordered; that stretch reads SEESVMQPEGDKADTQAVSSPASLATGSVSPSTHLRVFSGGEDLEAVSSPPTSESLSRSK. Positions 544–561 are enriched in polar residues; the sequence is QAVSSPASLATGSVSPST. The span at 576-587 shows a compositional bias: low complexity; sequence SSPPTSESLSRS. Phosphoserine occurs at positions 577, 599, 602, 634, 655, 658, 661, and 787. The interval 628 to 662 is disordered; it reads TLEDGDSPSQSLDPGESKRESEAQDSVSRGSDDSV. Residues 789–1046 form the Protein kinase 2 domain; it reads RSESDRLGQV…VEDIKSHPFF (258 aa). ATP is bound by residues 795 to 803 and Lys823; that span reads LGQVEVVVT. Asp919 acts as the Proton acceptor in catalysis.

This sequence belongs to the protein kinase superfamily. Ser/Thr protein kinase family. S6 kinase subfamily. In terms of assembly, interacts with SPHK1 and phosphatidylinositol 3-phosphate. Interacts (via PX domain) with PRDX3.

Its subcellular location is the cytoplasm. The protein localises to the membrane. It localises to the early endosome. It catalyses the reaction L-seryl-[protein] + ATP = O-phospho-L-seryl-[protein] + ADP + H(+). The catalysed reaction is L-threonyl-[protein] + ATP = O-phospho-L-threonyl-[protein] + ADP + H(+). Functionally, may be involved in transmitting sphingosine-1 phosphate (SPP)-mediated signaling into the cell. Plays a role in the recruitment of PRDX3 to early endosomes. The protein is Ribosomal protein S6 kinase delta-1 (Rps6kc1) of Mus musculus (Mouse).